A 243-amino-acid chain; its full sequence is 7-cyano-7-deazaguanine synthase (243 aa).

An ATP-binding site is contributed by 18-28 (FSGGQDSATCL). 4 residues coordinate Zn(2+): Cys206, Cys221, Cys224, and Cys227.

The protein belongs to the QueC family. Zn(2+) is required as a cofactor.

It catalyses the reaction 7-carboxy-7-deazaguanine + NH4(+) + ATP = 7-cyano-7-deazaguanine + ADP + phosphate + H2O + H(+). The protein operates within purine metabolism; 7-cyano-7-deazaguanine biosynthesis. Functionally, catalyzes the ATP-dependent conversion of 7-carboxy-7-deazaguanine (CDG) to 7-cyano-7-deazaguanine (preQ(0)). This Methylorubrum extorquens (strain CM4 / NCIMB 13688) (Methylobacterium extorquens) protein is 7-cyano-7-deazaguanine synthase.